A 271-amino-acid polypeptide reads, in one-letter code: 3-methyl-2-oxobutanoate hydroxymethyltransferase (271 aa).

The Mg(2+) site is built by Asp53 and Asp92. 3-methyl-2-oxobutanoate contacts are provided by residues 53–54 (DS), Asp92, and Lys120. Glu122 contacts Mg(2+). Glu189 acts as the Proton acceptor in catalysis.

Belongs to the PanB family. In terms of assembly, homodecamer; pentamer of dimers. Mg(2+) serves as cofactor.

The protein localises to the cytoplasm. It carries out the reaction 3-methyl-2-oxobutanoate + (6R)-5,10-methylene-5,6,7,8-tetrahydrofolate + H2O = 2-dehydropantoate + (6S)-5,6,7,8-tetrahydrofolate. The protein operates within cofactor biosynthesis; (R)-pantothenate biosynthesis; (R)-pantoate from 3-methyl-2-oxobutanoate: step 1/2. Catalyzes the reversible reaction in which hydroxymethyl group from 5,10-methylenetetrahydrofolate is transferred onto alpha-ketoisovalerate to form ketopantoate. This is 3-methyl-2-oxobutanoate hydroxymethyltransferase from Burkholderia mallei (strain NCTC 10247).